We begin with the raw amino-acid sequence, 160 residues long: Transcription elongation factor GreB (160 aa).

The protein belongs to the GreA/GreB family. GreB subfamily.

In terms of biological role, necessary for efficient RNA polymerase transcription elongation past template-encoded arresting sites. The arresting sites in DNA have the property of trapping a certain fraction of elongating RNA polymerases that pass through, resulting in locked ternary complexes. Cleavage of the nascent transcript by cleavage factors such as GreA or GreB allows the resumption of elongation from the new 3'terminus. GreB releases sequences of up to 9 nucleotides in length. This chain is Transcription elongation factor GreB, found in Vibrio vulnificus (strain CMCP6).